The following is a 20-amino-acid chain: GVFTFEDESTSTVAPAKLYK.

This sequence belongs to the BetVI family.

The polypeptide is Protein PR-L6 (Lupinus luteus (European yellow lupine)).